Consider the following 37-residue polypeptide: M-oxotoxin-Ot2a (37 aa).

Expressed by the venom gland.

The protein resides in the secreted. Its function is as follows. Disrupts biological membranes, particularly those rich in phosphocholine. Has antimicrobial activity against Gram-negative bacterium E.coli, Gram-positive bacteria B.subtilis and S.aureus, and hemolytic activity against sheep, pig and guinea pig red blood cells. Has insecticidal activity against S.frugiperda ovarian cells by opening non-selective ion channels. Enhances the insecticidal activity of spider venom neurotoxic peptides. The sequence is that of M-oxotoxin-Ot2a from Oxyopes takobius (Lynx spider).